We begin with the raw amino-acid sequence, 424 residues long: Enolase (424 aa).

Gln163 provides a ligand contact to (2R)-2-phosphoglycerate. Glu205 serves as the catalytic Proton donor. Mg(2+)-binding residues include Asp242, Glu285, and Asp312. Lys337, Arg366, Ser367, and Lys388 together coordinate (2R)-2-phosphoglycerate. The active-site Proton acceptor is Lys337.

This sequence belongs to the enolase family. The cofactor is Mg(2+).

It localises to the cytoplasm. The protein resides in the secreted. Its subcellular location is the cell surface. The enzyme catalyses (2R)-2-phosphoglycerate = phosphoenolpyruvate + H2O. It functions in the pathway carbohydrate degradation; glycolysis; pyruvate from D-glyceraldehyde 3-phosphate: step 4/5. Its function is as follows. Catalyzes the reversible conversion of 2-phosphoglycerate (2-PG) into phosphoenolpyruvate (PEP). It is essential for the degradation of carbohydrates via glycolysis. The sequence is that of Enolase from Sphingopyxis alaskensis (strain DSM 13593 / LMG 18877 / RB2256) (Sphingomonas alaskensis).